The sequence spans 719 residues: Fatty acid oxidation complex subunit alpha (719 aa).

The enoyl-CoA hydratase/isomerase stretch occupies residues 1–190 (MIYQGNRITV…KLGLVDAVVA (190 aa)). Asp-298 contributes to the substrate binding site. The segment at 313–719 (HDINEAAVLG…AAGETFYPKA (407 aa)) is 3-hydroxyacyl-CoA dehydrogenase. NAD(+) contacts are provided by residues Met-326, Asp-345, 402–404 (VVE), Lys-409, and Ser-431. His-452 (for 3-hydroxyacyl-CoA dehydrogenase activity) is an active-site residue. Position 455 (Asn-455) interacts with NAD(+). Residue Asn-502 coordinates substrate.

The protein in the N-terminal section; belongs to the enoyl-CoA hydratase/isomerase family. In the C-terminal section; belongs to the 3-hydroxyacyl-CoA dehydrogenase family. In terms of assembly, heterotetramer of two alpha chains (FadB) and two beta chains (FadA).

It catalyses the reaction a (3S)-3-hydroxyacyl-CoA + NAD(+) = a 3-oxoacyl-CoA + NADH + H(+). The catalysed reaction is a (3S)-3-hydroxyacyl-CoA = a (2E)-enoyl-CoA + H2O. It carries out the reaction a 4-saturated-(3S)-3-hydroxyacyl-CoA = a (3E)-enoyl-CoA + H2O. The enzyme catalyses (3S)-3-hydroxybutanoyl-CoA = (3R)-3-hydroxybutanoyl-CoA. It catalyses the reaction a (3Z)-enoyl-CoA = a 4-saturated (2E)-enoyl-CoA. The catalysed reaction is a (3E)-enoyl-CoA = a 4-saturated (2E)-enoyl-CoA. The protein operates within lipid metabolism; fatty acid beta-oxidation. In terms of biological role, involved in the aerobic and anaerobic degradation of long-chain fatty acids via beta-oxidation cycle. Catalyzes the formation of 3-oxoacyl-CoA from enoyl-CoA via L-3-hydroxyacyl-CoA. It can also use D-3-hydroxyacyl-CoA and cis-3-enoyl-CoA as substrate. In Psychrobacter sp. (strain PRwf-1), this protein is Fatty acid oxidation complex subunit alpha.